Here is a 27-residue protein sequence, read N- to C-terminus: Palustrin-1d (27 aa).

Cys21 and Cys27 are disulfide-bonded.

Expressed by the skin glands.

The protein localises to the secreted. Its function is as follows. Antimicrobial activity against Gram-negative bacterium E.coli. This is Palustrin-1d from Lithobates palustris (Pickerel frog).